We begin with the raw amino-acid sequence, 182 residues long: Peptidoglycan L,D-endopeptidase MepK (182 aa).

Residues 1 to 30 (MDKFDANRRKLLALGGVALGAAILPTPAFA) constitute a signal peptide (tat-type signal). Residues His133, Asp140, and His173 each coordinate Zn(2+).

The protein belongs to the peptidase M15 family. The cofactor is Zn(2+). Post-translationally, predicted to be exported by the Tat system. The position of the signal peptide cleavage has not been experimentally proven.

It functions in the pathway cell wall biogenesis; cell wall polysaccharide biosynthesis. Functionally, l,D-endopeptidase that cleaves meso-diaminopimelic acid (mDAP)-mDAP cross-links in peptidoglycan. It works in conjunction with other elongation-specific D,D-endopeptidases to make space for efficient incorporation of nascent peptidoglycan strands into the sacculus and thus enable cell wall expansion. The protein is Peptidoglycan L,D-endopeptidase MepK of Escherichia coli O157:H7.